A 90-amino-acid chain; its full sequence is Small ribosomal subunit protein bS16 (90 aa).

Belongs to the bacterial ribosomal protein bS16 family. As to quaternary structure, part of the 30S ribosomal subunit.

In Bacillus subtilis (strain 168), this protein is Small ribosomal subunit protein bS16.